A 440-amino-acid polypeptide reads, in one-letter code: Xaa-Pro dipeptidase (440 aa).

5 residues coordinate Mn(2+): Asp244, Asp255, His335, Glu380, and Glu419.

Belongs to the peptidase M24B family. Bacterial-type prolidase subfamily. Mn(2+) is required as a cofactor.

It catalyses the reaction Xaa-L-Pro dipeptide + H2O = an L-alpha-amino acid + L-proline. Splits dipeptides with a prolyl residue in the C-terminal position. The sequence is that of Xaa-Pro dipeptidase from Shewanella denitrificans (strain OS217 / ATCC BAA-1090 / DSM 15013).